A 93-amino-acid polypeptide reads, in one-letter code: U12-lycotoxin-Ls1c (93 aa).

Residues 1-18 form the signal peptide; the sequence is MKFAVILLFSLVVLAVAS. The propeptide occupies 19–38; it reads ESVEEVRREIDIEDLPEQQR.

This sequence belongs to the neurotoxin 31 family. Contains 5 disulfide bonds. Expressed by the venom gland.

It localises to the secreted. The chain is U12-lycotoxin-Ls1c from Lycosa singoriensis (Wolf spider).